Reading from the N-terminus, the 397-residue chain is CCA-adding enzyme (397 aa).

Residues G26 and R29 each contribute to the ATP site. Residues G26 and R29 each coordinate CTP. 2 residues coordinate Mg(2+): D39 and D41. 5 residues coordinate ATP: R110, D153, R156, R159, and R162. The CTP site is built by R110, D153, R156, R159, and R162.

The protein belongs to the tRNA nucleotidyltransferase/poly(A) polymerase family. Bacterial CCA-adding enzyme type 3 subfamily. In terms of assembly, homodimer. It depends on Mg(2+) as a cofactor.

The catalysed reaction is a tRNA precursor + 2 CTP + ATP = a tRNA with a 3' CCA end + 3 diphosphate. It catalyses the reaction a tRNA with a 3' CCA end + 2 CTP + ATP = a tRNA with a 3' CCACCA end + 3 diphosphate. Its function is as follows. Catalyzes the addition and repair of the essential 3'-terminal CCA sequence in tRNAs without using a nucleic acid template. Adds these three nucleotides in the order of C, C, and A to the tRNA nucleotide-73, using CTP and ATP as substrates and producing inorganic pyrophosphate. tRNA 3'-terminal CCA addition is required both for tRNA processing and repair. Also involved in tRNA surveillance by mediating tandem CCA addition to generate a CCACCA at the 3' terminus of unstable tRNAs. While stable tRNAs receive only 3'-terminal CCA, unstable tRNAs are marked with CCACCA and rapidly degraded. In Bacillus cytotoxicus (strain DSM 22905 / CIP 110041 / 391-98 / NVH 391-98), this protein is CCA-adding enzyme.